We begin with the raw amino-acid sequence, 382 residues long: Pyrimidine monooxygenase RutA (382 aa).

Residues 68-69, N134, E143, 159-160, and S209 each bind FMN; these read IK and RY.

It belongs to the NtaA/SnaA/DszA monooxygenase family. RutA subfamily.

It carries out the reaction uracil + FMNH2 + NADH + O2 = (Z)-3-ureidoacrylate + FMN + NAD(+) + H2O + H(+). It catalyses the reaction thymine + FMNH2 + NADH + O2 = (Z)-2-methylureidoacrylate + FMN + NAD(+) + H2O + H(+). Catalyzes the pyrimidine ring opening between N-3 and C-4 by an unusual flavin hydroperoxide-catalyzed mechanism, adding oxygen atoms in the process to yield ureidoacrylate peracid, that immediately reacts with FMN forming ureidoacrylate and FMN-N(5)-oxide. The FMN-N(5)-oxide reacts spontaneously with NADH to produce FMN. Requires the flavin reductase RutF to regenerate FMN in vivo. The polypeptide is Pyrimidine monooxygenase RutA (Escherichia coli (strain K12 / MC4100 / BW2952)).